The primary structure comprises 1088 residues: MTILHSTMLSEVLDLESYRKKISDEVRECFDLASQARELGMDVTDKVEIPLASDMAERIEALIGISGIADQIRDLSKKMSREEVSLEMSRRVANIFKDNKKEALDKAIRVGLAILTEGILVAPLEGIADVYIGKNADGSDYVGISYAGPIRGAGGTAQALSVLIGDVVRRELGITRYIPTEEEIERYIEEIESYDRIKHLQYLPTPDEIKLVVKNSPVCIDGEGSEEEEVSGHRDMARVKTNRIRGGMCLVLCEGLVQKARKILKYTSSMHLEEWSFLSSISGKSDDKGSKKSDKFLKDIVAGRPVFSHPSRPGGFRLRYGRSRVSGLAAASLNPATMYIMGKFIAIGSQIKVELPGKAAAVTPCDTIDGPTVLLRNGDHVKINNIEKAKELYDEVVEITDAGEILIAYGDFLENNYNLPTASFTKEWWMQYLPDGLDGNEVDQFRAVELSRQYNIPLHPDFDYYWHDISFEELEYLISAVENGRLSDNSFLIPYSASEVLIKLGVQFKRSGNFLVLNQYYPLLVSLGYDVFEDKIKRVKPYQRKSSVLETVNYLSGITIKPRAPTRVGSRLGRPEKAGDRKMKPMVHSLFPVESYGEARRSILNANKKTDGTYKAEVFFYRCTSCGYESPSPTCPKCGSRSKPIGTKNSEIDLSVILRKAEDRLGIKLDELKEFKGVKKLMSKEKVAEPIEKGILRAIHGISVNKDGTCRFDMSDIPITHFRYKEIGISKEKLSELGYEVKDVNEIFPQDVIIPRKAAKYLFDVSKFIDDLLVRYYGLPPFYSLKSEEDLVGHLVIGLAPHTSGGVVGRIIGFSDVNAFYAHPFFHAAKRRNCDGDEDSVMLLMDGFLNFSARYLPSTTGGLMDAPLVLSVLINPDEIDKEALNVDTLQKYPLIFYEATERHAAPSELEETMMTMKVRIKKTATYRNSSYTFDTSDINKGVLVSSYKTLATMDDKISEQLGLARRIRAVDADDVAARVISTHFLPDMYGNFRRFFSQEFRCTKCNAKYRRIPLSGRCMKCGSDSLTLTIHKGSVIKYLDETLKIEKEYNIPKYLKERIDNLARTIKETFPDEEKPDAAIKITGLDMY.

It belongs to the archaeal DNA polymerase II family. In terms of assembly, heterodimer of a large subunit and a small subunit.

It catalyses the reaction DNA(n) + a 2'-deoxyribonucleoside 5'-triphosphate = DNA(n+1) + diphosphate. It carries out the reaction Exonucleolytic cleavage in the 3'- to 5'-direction to yield nucleoside 5'-phosphates.. In terms of biological role, possesses two activities: a DNA synthesis (polymerase) and an exonucleolytic activity that degrades single-stranded DNA in the 3'- to 5'-direction. Has a template-primer preference which is characteristic of a replicative DNA polymerase. This is DNA polymerase II large subunit (polC) from Thermoplasma volcanium (strain ATCC 51530 / DSM 4299 / JCM 9571 / NBRC 15438 / GSS1).